Consider the following 420-residue polypeptide: MDKFRVQGPTRLAGEVTISGAKNAALPILFAALLAEEPVEIQNVPKLRDIDTTMKLLGQLGARVERNGSVHVDASDVNVFCAPYDLVKTMRASIWALGPLVARFGQGQVSLPGGCAIGARPVDLHIYGLEQLGAQIVLEEGYVKATVDGRLKGAHIVMDKVSVGATVTIMSAATLAEGTTIIENAAREPEIVDTANFLNTLGAKISGAGSDKITIEGVARLGGGVYRVVPDRIETGTFLVAAAVSRGQIICRNTRPDTLDAVLAKLREAGADIEVGEDWISLDMHGKRPKAVTFRTSPHPGFPTDMQAQFSLLNLVAEGTGVITETIFENRFMHVPELIRMGAQAEIESNTVICHGVDKLSGAQVMATDLRASASLVLAGCIAEGVTTVDRIYHIDRGYDRIEDKLRALGANIERVKEHE.

Residue 22–23 (KN) coordinates phosphoenolpyruvate. Arg-91 is a binding site for UDP-N-acetyl-alpha-D-glucosamine. Cys-115 functions as the Proton donor in the catalytic mechanism. Cys-115 is subject to 2-(S-cysteinyl)pyruvic acid O-phosphothioketal. Residues 120–124 (RPVDL), 160–163 (KVSV), Asp-305, and Ile-327 each bind UDP-N-acetyl-alpha-D-glucosamine.

This sequence belongs to the EPSP synthase family. MurA subfamily.

The protein resides in the cytoplasm. It carries out the reaction phosphoenolpyruvate + UDP-N-acetyl-alpha-D-glucosamine = UDP-N-acetyl-3-O-(1-carboxyvinyl)-alpha-D-glucosamine + phosphate. Its pathway is cell wall biogenesis; peptidoglycan biosynthesis. Cell wall formation. Adds enolpyruvyl to UDP-N-acetylglucosamine. The chain is UDP-N-acetylglucosamine 1-carboxyvinyltransferase from Pectobacterium atrosepticum (strain SCRI 1043 / ATCC BAA-672) (Erwinia carotovora subsp. atroseptica).